Here is a 151-residue protein sequence, read N- to C-terminus: Small ribosomal subunit protein uS13 (151 aa).

It belongs to the universal ribosomal protein uS13 family. In terms of assembly, part of the 30S ribosomal subunit. Forms a loose heterodimer with protein S19. Forms two bridges to the 50S subunit in the 70S ribosome.

In terms of biological role, located at the top of the head of the 30S subunit, it contacts several helices of the 16S rRNA. In the 70S ribosome it contacts the 23S rRNA (bridge B1a) and protein L5 of the 50S subunit (bridge B1b), connecting the 2 subunits; these bridges are implicated in subunit movement. This chain is Small ribosomal subunit protein uS13, found in Methanospirillum hungatei JF-1 (strain ATCC 27890 / DSM 864 / NBRC 100397 / JF-1).